The sequence spans 402 residues: Adenylyltransferase and sulfurtransferase MOCS3 (402 aa).

ATP contacts are provided by residues Gly-47, Asp-68, 75–79, Lys-92, and 136–137; these read DNLHR and DN. Residues Cys-178 and Cys-181 each coordinate Zn(2+). The active-site Glycyl thioester intermediate; for adenylyltransferase activity is Cys-195. Positions 253 and 256 each coordinate Zn(2+). In terms of domain architecture, Rhodanese spans 303–400; the sequence is AARKQFLLDT…WALKINDEFP (98 aa). Cys-359 serves as the catalytic Cysteine persulfide intermediate; for sulfurtransferase activity.

The protein in the N-terminal section; belongs to the HesA/MoeB/ThiF family. UBA4 subfamily. The cofactor is Zn(2+).

It localises to the cytoplasm. The protein localises to the cytosol. The catalysed reaction is [molybdopterin-synthase sulfur-carrier protein]-C-terminal Gly-Gly + ATP + H(+) = [molybdopterin-synthase sulfur-carrier protein]-C-terminal Gly-Gly-AMP + diphosphate. The enzyme catalyses [molybdopterin-synthase sulfur-carrier protein]-C-terminal Gly-Gly-AMP + S-sulfanyl-L-cysteinyl-[cysteine desulfurase] + AH2 = [molybdopterin-synthase sulfur-carrier protein]-C-terminal-Gly-aminoethanethioate + L-cysteinyl-[cysteine desulfurase] + A + AMP + 2 H(+). Its pathway is tRNA modification; 5-methoxycarbonylmethyl-2-thiouridine-tRNA biosynthesis. It functions in the pathway cofactor biosynthesis; molybdopterin biosynthesis. In terms of biological role, plays a central role in 2-thiolation of mcm(5)S(2)U at tRNA wobble positions of cytosolic tRNA(Lys), tRNA(Glu) and tRNA(Gln). Also essential during biosynthesis of the molybdenum cofactor. Acts by mediating the C-terminal thiocarboxylation of sulfur carriers URM1 and MOCS2A. Its N-terminus first activates URM1 and MOCS2A as acyl-adenylates (-COAMP), then the persulfide sulfur on the catalytic cysteine is transferred to URM1 and MOCS2A to form thiocarboxylation (-COSH) of their C-terminus. The reaction probably involves hydrogen sulfide that is generated from the persulfide intermediate and that acts as a nucleophile towards URM1 and MOCS2A. Subsequently, a transient disulfide bond is formed. Does not use thiosulfate as sulfur donor; NFS1 probably acting as a sulfur donor for thiocarboxylation reactions. The protein is Adenylyltransferase and sulfurtransferase MOCS3 of Caenorhabditis briggsae.